We begin with the raw amino-acid sequence, 638 residues long: MIDTTRYPRLSRIQTPDDLRRFDEAELTAIAEELRSYLIESVGKSGGHFAAGLGVIELTVALHYLYQTPVDQLVWDVGHQTYPHKILTGRRDQIHTVKQKDGVAPFPKREESIYDTFGVGHSSTSISAALGMAIAAQRNGDDRKVVAVIGDGAMTAGMVYEALNHAGGMDPEPNLLVILNDNRMSISEAVGGLTKMLGRASGSRTLNAIREGGKKILGDKKNNPTARFVRRWEEHWKGMFVPSTLFEEMGFHYTGPIDGHDLPSLVGALKTLQTLKGPQLLHVITTKGKGYELAEGDQIGYHAVGPFDPSKGLVAKAGAKKPTYTDVFSDWVCDMAAAEPKLLVITPAMREGSGLVRFSKEYPQRYFDVAIAEQHAVTLAAGMATQGAKPVVAIYSTFLQRGYDQLVHDVAVQQLDVLFAIDRGGVVGPDGATHAGNLDLSFLRCVPHMVVMAPADEAECRQMLSTGVQYQGPAAVRYPRGTGPGVALDASLATLPIGKAQLRHSGTRIALLGFGATVDAAEAVGRELGLTVVNMRFVKPLDKAMLLELAKTHDGFVTIEDNVVAGGAGAGVSELLNAEAITMPMLHLGLPDSFQHHASREDLLAEAGIDQAGIRAAVLKRWPQLMTSKTPALNAAAG.

Thiamine diphosphate contacts are provided by residues His-79 and 120–122; that span reads GHS. Asp-151 contacts Mg(2+). Residues 152–153, Asn-182, Tyr-291, and Glu-373 each bind thiamine diphosphate; that span reads GA. Mg(2+) is bound at residue Asn-182.

This sequence belongs to the transketolase family. DXPS subfamily. In terms of assembly, homodimer. Mg(2+) is required as a cofactor. The cofactor is thiamine diphosphate.

It catalyses the reaction D-glyceraldehyde 3-phosphate + pyruvate + H(+) = 1-deoxy-D-xylulose 5-phosphate + CO2. Its pathway is metabolic intermediate biosynthesis; 1-deoxy-D-xylulose 5-phosphate biosynthesis; 1-deoxy-D-xylulose 5-phosphate from D-glyceraldehyde 3-phosphate and pyruvate: step 1/1. Its function is as follows. Catalyzes the acyloin condensation reaction between C atoms 2 and 3 of pyruvate and glyceraldehyde 3-phosphate to yield 1-deoxy-D-xylulose-5-phosphate (DXP). In Xanthomonas euvesicatoria pv. vesicatoria (strain 85-10) (Xanthomonas campestris pv. vesicatoria), this protein is 1-deoxy-D-xylulose-5-phosphate synthase.